Reading from the N-terminus, the 927-residue chain is Disks large homolog 1 (927 aa).

Positions 4–64 constitute an L27 domain; the sequence is RKQDTQRALT…FYEVTLLDNP (61 aa). 3 consecutive PDZ domains span residues 223-310, 318-405, and 466-547; these read EITL…RRRK, DIKL…AKPT, and KVVL…QYRP. The SH3 domain maps to 581–651; that stretch reads KRSLYVRALF…PSKRRVEKKE (71 aa). A disordered region spans residues 692 to 719; sequence DQSEMETSDVDQHVTSNASDSESSYRGQ. Residues 704-717 show a composition bias toward polar residues; the sequence is HVTSNASDSESSYR. One can recognise a Guanylate kinase-like domain in the interval 737-912; that stretch reads SRPVIILGPT…IYNQIKQIIE (176 aa).

It belongs to the MAGUK family.

It localises to the cell membrane. The protein localises to the endoplasmic reticulum membrane. Its subcellular location is the cell junction. It is found in the cytoplasm. The protein resides in the apical cell membrane. Its function is as follows. Essential multidomain scaffolding protein required for normal development. Recruits channels, receptors and signaling molecules to discrete plasma membrane domains in polarized cells. Promotes epithelial cell layer barrier function via maintaining cell-cell adhesion. May play a role in adherens junction assembly, signal transduction and cell proliferation. This chain is Disks large homolog 1 (dlg1), found in Xenopus tropicalis (Western clawed frog).